The sequence spans 142 residues: Movement protein (142 aa).

The tract at residues 1–142 is disordered; that stretch reads MDLPEDQARF…LDRSESLSRY (142 aa). Composition is skewed to polar residues over residues 9-22 and 33-43; these read RFTN…TSME and LYQSASRSQMA. Low complexity predominate over residues 50–62; it reads SIISRTSSWRTSP. Composition is skewed to polar residues over residues 74–95 and 113–124; these read MNSI…SASP and TTLQRTNSGFST. The span at 125 to 142 shows a compositional bias: basic and acidic residues; sequence KETEMPRLLDRSESLSRY.

Belongs to the luteoviruses movement protein family.

Functionally, transports viral genome to neighboring plant cells directly through plasmosdesmata, without any budding. The movement protein allows efficient cell to cell propagation, by bypassing the host cell wall barrier. In Cicer arietinum (Chickpea), this protein is Movement protein.